The primary structure comprises 200 residues: 3-isopropylmalate dehydratase small subunit (200 aa).

Belongs to the LeuD family. LeuD type 1 subfamily. In terms of assembly, heterodimer of LeuC and LeuD.

The catalysed reaction is (2R,3S)-3-isopropylmalate = (2S)-2-isopropylmalate. It functions in the pathway amino-acid biosynthesis; L-leucine biosynthesis; L-leucine from 3-methyl-2-oxobutanoate: step 2/4. Catalyzes the isomerization between 2-isopropylmalate and 3-isopropylmalate, via the formation of 2-isopropylmaleate. The polypeptide is 3-isopropylmalate dehydratase small subunit (Aliivibrio fischeri (strain MJ11) (Vibrio fischeri)).